A 224-amino-acid polypeptide reads, in one-letter code: uncharacterized protein (224 aa).

Pro residues predominate over residues threonine 44 to leucine 139. The segment at threonine 44 to tyrosine 145 is disordered.

This is an uncharacterized protein from Lepidoptera (butterflies and moths).